The chain runs to 336 residues: Ephrin-B2 (336 aa).

The N-terminal stretch at 1–28 (MAMARSRRDSVWKYCWGLLMVLCRTAIS) is a signal peptide. The Extracellular portion of the chain corresponds to 29-232 (RSIVLEPIYW…LLGSEVALFA (204 aa)). In terms of domain architecture, Ephrin RBD spans 31-167 (IVLEPIYWNS…TRAMKILMKV (137 aa)). The N-linked (GlcNAc...) asparagine glycan is linked to asparagine 39. Intrachain disulfides connect cysteine 65–cysteine 104 and cysteine 92–cysteine 156. The N-linked (GlcNAc...) asparagine glycan is linked to asparagine 142. The tract at residues 170 to 216 (DASSAGSARNHGPTRRPELEAGTNGRSSTTSPFVKPNPGSSTDGNSA) is disordered. Positions 193 to 216 (NGRSSTTSPFVKPNPGSSTDGNSA) are enriched in polar residues. Residues 233-253 (GIASGCIIFIVIIITLVVLLL) form a helical membrane-spanning segment. At 254-336 (KYRRRHRKHS…QSPANIYYKV (83 aa)) the chain is on the cytoplasmic side. Serine 263 carries the post-translational modification Phosphoserine. A Phosphothreonine modification is found at threonine 277. Omega-N-methylarginine is present on arginine 280. Positions 334–336 (YKV) match the PDZ-binding motif.

The protein belongs to the ephrin family. In terms of assembly, interacts with PDZRN3. Binds to the ephrin receptor EPHA3, EPHA4 and EPHB4. In terms of processing, inducible phosphorylation of tyrosine residues in the cytoplasmic domain. As to expression, expressed in inner and outer pillar cells of the organ of Corti (at protein level). Expressed on lateral floor plate cells, specifically on commissural axon segments that have passed through the floor plate. Expressed in cells of the retinal ganglion cell layer during retinal axon guidance to the optic disk. Expressed in myogenic progenitor cells.

It localises to the cell membrane. It is found in the cell junction. The protein resides in the adherens junction. In terms of biological role, cell surface transmembrane ligand for Eph receptors, a family of receptor tyrosine kinases which are crucial for migration, repulsion and adhesion during neuronal, vascular and epithelial development. Binds promiscuously Eph receptors residing on adjacent cells, leading to contact-dependent bidirectional signaling into neighboring cells. The signaling pathway downstream of the receptor is referred to as forward signaling while the signaling pathway downstream of the ephrin ligand is referred to as reverse signaling. Binds to receptor tyrosine kinase including EPHA4, EPHA3 and EPHB4. Together with EPHB4 plays a central role in heart morphogenesis and angiogenesis through regulation of cell adhesion and cell migration. EPHB4-mediated forward signaling controls cellular repulsion and segregation from EFNB2-expressing cells. May play a role in constraining the orientation of longitudinally projecting axons. The chain is Ephrin-B2 (Efnb2) from Mus musculus (Mouse).